The chain runs to 145 residues: Hemoglobin subunit beta (145 aa).

Residues Met-1 to His-145 enclose the Globin domain. The residue at position 11 (Thr-11) is a Phosphothreonine. At Lys-58 the chain carries N6-acetyllysine. His-62 contributes to the heme b binding site. Residue Lys-81 is modified to N6-acetyllysine. His-91 serves as a coordination point for heme b. S-nitrosocysteine is present on Cys-92.

The protein belongs to the globin family. As to quaternary structure, heterotetramer of two alpha chains and two beta chains. In terms of tissue distribution, red blood cells.

Its function is as follows. Involved in oxygen transport from the lung to the various peripheral tissues. The chain is Hemoglobin subunit beta (HBB) from Rangifer tarandus (Reindeer).